We begin with the raw amino-acid sequence, 667 residues long: Long-chain-fatty-acid--CoA ligase ACSBG2 (667 aa).

Residues 227–235 (TSGTTGTPK), 418–423 (EIYGMS), Asp496, Arg511, and Arg624 each bind ATP.

This sequence belongs to the ATP-dependent AMP-binding enzyme family. Bubblegum subfamily. Testis- and brainstem-specific. Expressed in pubertal and adult testis. Enriched in germ cells and Sertoli cells while present at a lower level in Leydig cells. Present in testicular Sertoli cells and large motoneurons in the medulla oblongata and cervical spinal cord (at protein level).

It localises to the cytoplasm. The protein resides in the membrane. It carries out the reaction a long-chain fatty acid + ATP + CoA = a long-chain fatty acyl-CoA + AMP + diphosphate. It catalyses the reaction (5Z,8Z,11Z,14Z)-eicosatetraenoate + ATP + CoA = (5Z,8Z,11Z,14Z)-eicosatetraenoyl-CoA + AMP + diphosphate. The enzyme catalyses hexadecanoate + ATP + CoA = hexadecanoyl-CoA + AMP + diphosphate. The catalysed reaction is (9Z)-octadecenoate + ATP + CoA = (9Z)-octadecenoyl-CoA + AMP + diphosphate. It carries out the reaction (9Z,12Z)-octadecadienoate + ATP + CoA = (9Z,12Z)-octadecadienoyl-CoA + AMP + diphosphate. It catalyses the reaction tetracosanoate + ATP + CoA = tetracosanoyl-CoA + AMP + diphosphate. Catalyzes the conversion of fatty acids such as long chain and very long-chain fatty acids to their active form acyl-CoAs for both synthesis of cellular lipids, and degradation via beta-oxidation. Can activate diverse saturated, monosaturated and polyunsaturated fatty acids. Has increased ability to activate oleic and linoleic acid. May play a role in spermatogenesis. In Mus musculus (Mouse), this protein is Long-chain-fatty-acid--CoA ligase ACSBG2.